We begin with the raw amino-acid sequence, 238 residues long: Zinc import ATP-binding protein ZnuC (238 aa).

In terms of domain architecture, ABC transporter spans 5–220 (IQLNNISVNF…SEFIAIFGNI (216 aa)). An ATP-binding site is contributed by 37–44 (GPNGAGKS).

It belongs to the ABC transporter superfamily. Zinc importer (TC 3.A.1.15.5) family. As to quaternary structure, the complex is composed of two ATP-binding proteins (ZnuC), two transmembrane proteins (ZnuB) and a solute-binding protein (ZnuA).

The protein localises to the cell membrane. The catalysed reaction is Zn(2+)(out) + ATP(in) + H2O(in) = Zn(2+)(in) + ADP(in) + phosphate(in) + H(+)(in). In terms of biological role, part of the ABC transporter complex ZnuABC involved in zinc import. Responsible for energy coupling to the transport system. In Buchnera aphidicola subsp. Baizongia pistaciae (strain Bp), this protein is Zinc import ATP-binding protein ZnuC.